We begin with the raw amino-acid sequence, 379 residues long: NADH-rubredoxin oxidoreductase (379 aa).

2 disulfides stabilise this stretch: C26-C286 and C137-C216. FAD-binding positions include 33–35, R42, A79, and Y125; that span reads NSE. An FAD-binding site is contributed by D259.

It belongs to the FAD-dependent oxidoreductase family. In terms of assembly, monomer. FAD serves as cofactor.

The enzyme catalyses 2 reduced [rubredoxin] + NAD(+) + H(+) = 2 oxidized [rubredoxin] + NADH. Functionally, catalyzes the NADH-dependent reduction of rubredoxin (Rd). NADPH is a very poor electron donor compared to NADH. Functions as an intermediate component in the electron transfer chain: NADH-&gt;NROR-&gt;Rd-&gt;FprA1/2. Also functions as an intermediate component in the electron transfer chains from NADH to revRbr and Dfx. Therefore, is a key electron carrier in an efficient multienzyme complex that can scavenge O(2) and reactive oxygen species (ROS), and thus plays an important role in the oxidative stress defense system in C.acetobutylicum, an obligate anaerobic bacterium. The chain is NADH-rubredoxin oxidoreductase (nroR) from Clostridium acetobutylicum (strain ATCC 824 / DSM 792 / JCM 1419 / IAM 19013 / LMG 5710 / NBRC 13948 / NRRL B-527 / VKM B-1787 / 2291 / W).